The chain runs to 181 residues: dCTP deaminase (181 aa).

DCTP contacts are provided by residues 100–105 (RSTFAR) and Asp116. The active-site Proton donor/acceptor is Glu126. Residues Tyr158 and Gln165 each coordinate dCTP. The segment at 160 to 181 (GKYQGQRGVTPPKLDNSSSKNF) is disordered.

The protein belongs to the dCTP deaminase family. In terms of assembly, homotrimer.

It catalyses the reaction dCTP + H2O + H(+) = dUTP + NH4(+). The protein operates within pyrimidine metabolism; dUMP biosynthesis; dUMP from dCTP (dUTP route): step 1/2. In terms of biological role, catalyzes the deamination of dCTP to dUTP. This is dCTP deaminase from Desulfurococcus amylolyticus (strain DSM 18924 / JCM 16383 / VKM B-2413 / 1221n) (Desulfurococcus kamchatkensis).